The chain runs to 505 residues: Putative thymidine phosphorylase (505 aa).

Belongs to the thymidine/pyrimidine-nucleoside phosphorylase family. Type 2 subfamily.

The enzyme catalyses thymidine + phosphate = 2-deoxy-alpha-D-ribose 1-phosphate + thymine. In Parvibaculum lavamentivorans (strain DS-1 / DSM 13023 / NCIMB 13966), this protein is Putative thymidine phosphorylase.